Here is a 184-residue protein sequence, read N- to C-terminus: MSENYTPRLKTRYRSEIRETLNKEFEYANVMQIPGVTKVVVNMGVGDAARDSKLINGALNDLTLITGQKPQIRRAKKAIANFKLREGMPIGARVTLRGDRMWEFLDRLLTVALPRIRDFRGLSDKQFDGHGNYTFGLSEQSMFYELDVDKIDRPRGMNITVVTSATNNEEGRALLRELGFPFKK.

It belongs to the universal ribosomal protein uL5 family. Part of the 50S ribosomal subunit; part of the 5S rRNA/L5/L18/L25 subcomplex. Contacts the 5S rRNA and the P site tRNA. Forms a bridge to the 30S subunit in the 70S ribosome.

This is one of the proteins that bind and probably mediate the attachment of the 5S RNA into the large ribosomal subunit, where it forms part of the central protuberance. In the 70S ribosome it contacts protein S13 of the 30S subunit (bridge B1b), connecting the 2 subunits; this bridge is implicated in subunit movement. Contacts the P site tRNA; the 5S rRNA and some of its associated proteins might help stabilize positioning of ribosome-bound tRNAs. The protein is Large ribosomal subunit protein uL5 of Corynebacterium kroppenstedtii (strain DSM 44385 / JCM 11950 / CIP 105744 / CCUG 35717).